Consider the following 200-residue polypeptide: dITP/XTP pyrophosphatase (200 aa).

A substrate-binding site is contributed by 7–12 (TSNKHK). Residues E38 and D73 each contribute to the Mg(2+) site. Residue D73 is the Proton acceptor of the active site. Substrate-binding positions include S74, 154–157 (FGYD), K177, and 182–183 (HR).

It belongs to the HAM1 NTPase family. In terms of assembly, homodimer. Requires Mg(2+) as cofactor.

The catalysed reaction is XTP + H2O = XMP + diphosphate + H(+). It catalyses the reaction dITP + H2O = dIMP + diphosphate + H(+). It carries out the reaction ITP + H2O = IMP + diphosphate + H(+). Pyrophosphatase that catalyzes the hydrolysis of nucleoside triphosphates to their monophosphate derivatives, with a high preference for the non-canonical purine nucleotides XTP (xanthosine triphosphate), dITP (deoxyinosine triphosphate) and ITP. Seems to function as a house-cleaning enzyme that removes non-canonical purine nucleotides from the nucleotide pool, thus preventing their incorporation into DNA/RNA and avoiding chromosomal lesions. This is dITP/XTP pyrophosphatase from Campylobacter jejuni subsp. doylei (strain ATCC BAA-1458 / RM4099 / 269.97).